The following is a 154-amino-acid chain: SsrA-binding protein (154 aa).

Belongs to the SmpB family.

Its subcellular location is the cytoplasm. Required for rescue of stalled ribosomes mediated by trans-translation. Binds to transfer-messenger RNA (tmRNA), required for stable association of tmRNA with ribosomes. tmRNA and SmpB together mimic tRNA shape, replacing the anticodon stem-loop with SmpB. tmRNA is encoded by the ssrA gene; the 2 termini fold to resemble tRNA(Ala) and it encodes a 'tag peptide', a short internal open reading frame. During trans-translation Ala-aminoacylated tmRNA acts like a tRNA, entering the A-site of stalled ribosomes, displacing the stalled mRNA. The ribosome then switches to translate the ORF on the tmRNA; the nascent peptide is terminated with the 'tag peptide' encoded by the tmRNA and targeted for degradation. The ribosome is freed to recommence translation, which seems to be the essential function of trans-translation. The chain is SsrA-binding protein from Ruminiclostridium cellulolyticum (strain ATCC 35319 / DSM 5812 / JCM 6584 / H10) (Clostridium cellulolyticum).